A 333-amino-acid polypeptide reads, in one-letter code: MIDTTLPLTDIHRHLDGNIRPQTILELGRQYNISLPAQSLETLIPHVQVIANEPDLVSFLTKLDWGVKVLASLDACRRVAFENIEDAARNGLHYVELRFSPGYMAMAHKLPVAGVVEAVIDGVREGCRTFGVQAKLIGIMSRTFGEAACQQELEAFLAHRDQITALDLAGDELGFPGSLFLSHFNLARDAGWHITVHAGEAAGPESIWQAIRELGAERIGHGVKAIEDRALMDFLAEQQIGIESCLTSNIQTSTVAELAAHPLKTFLEHGIRAGINTDDPGVQGVDIIHEYTVAAPAAGLSREQIRQAQINGLEMAFLSAEEKRALREKVAAK.

Residues histidine 12 and histidine 14 each coordinate Zn(2+). Substrate is bound by residues histidine 14, aspartate 16, and glycine 170. Histidine 197 is a Zn(2+) binding site. Residue glutamate 200 is the Proton donor of the active site. Aspartate 278 contributes to the Zn(2+) binding site. Position 279 (aspartate 279) interacts with substrate.

Belongs to the metallo-dependent hydrolases superfamily. Adenosine and AMP deaminases family. Adenosine deaminase subfamily. Zn(2+) serves as cofactor.

The catalysed reaction is adenosine + H2O + H(+) = inosine + NH4(+). The enzyme catalyses 2'-deoxyadenosine + H2O + H(+) = 2'-deoxyinosine + NH4(+). Its function is as follows. Catalyzes the hydrolytic deamination of adenosine and 2-deoxyadenosine. The sequence is that of Adenosine deaminase from Shigella boydii serotype 4 (strain Sb227).